The following is a 372-amino-acid chain: Lung adenoma susceptibility protein 2 (372 aa).

Positions 1–31 are cleaved as a signal peptide; sequence MAKSKTKHRLCSQESSVSALLASCTLSGSNS. The residue at position 161 (serine 161) is a Phosphoserine. Positions 248–268 are disordered; that stretch reads KSPVPVNSDDSPQQTSRAKSA. The segment covering 255–265 has biased composition (polar residues); that stretch reads SDDSPQQTSRA.

The protein localises to the secreted. Functionally, might play a role in cell proliferation. The chain is Lung adenoma susceptibility protein 2 (LAS2) from Homo sapiens (Human).